The sequence spans 215 residues: E3 ubiquitin-protein ligase znrf1 (215 aa).

Disordered regions lie at residues 1–39 (MGGKQSTAGRPRGAFPGVSTDDSAVPPSAHFGHYRPGGT) and 66–96 (YTPRGTDSDRAGGGSGSDPAHNGNGYQETGG). Gly-2 is lipidated: N-myristoyl glycine. The segment at 172-213 (CVICLEELQQGDTIARLPCLCIYHKSCIDSWFEINRSCPEHP) adopts an RING-type; atypical zinc-finger fold.

It is found in the endosome. The protein resides in the lysosome. It localises to the membrane. It catalyses the reaction S-ubiquitinyl-[E2 ubiquitin-conjugating enzyme]-L-cysteine + [acceptor protein]-L-lysine = [E2 ubiquitin-conjugating enzyme]-L-cysteine + N(6)-ubiquitinyl-[acceptor protein]-L-lysine.. It functions in the pathway protein modification; protein ubiquitination. In terms of biological role, E3 ubiquitin-protein ligase that plays a role in neuron cells differentiation. Plays a role in the establishment and maintenance of neuronal transmission and plasticity. The polypeptide is E3 ubiquitin-protein ligase znrf1 (znrf1) (Danio rerio (Zebrafish)).